A 1368-amino-acid chain; its full sequence is Inactive tyrosine-protein kinase PRAG1 (1368 aa).

Residues 200-236 form a disordered region; the sequence is CLKGPRPCTSPQPLRESLPSEDDSDQRCSPSGDSEGG. A Phosphotyrosine; by CSK modification is found at tyrosine 238. Residues 297–330 form a disordered region; the sequence is STANPPHLGPKKPSLNSEAASSSDGLSCGSSRSG. The span at 317 to 330 shows a compositional bias: low complexity; sequence SSSDGLSCGSSRSG. Phosphotyrosine; by CSK occurs at positions 343 and 391. Disordered stretches follow at residues 392–443, 499–605, and 636–792; these read AESA…PNAA, LSSR…GAWS, and HSNS…KKIV. The span at 414–434 shows a compositional bias: polar residues; that stretch reads VSSGQVWTGDTWSQKTPSGWS. The segment covering 502–518 has biased composition (basic and acidic residues); the sequence is RESHPHNMTENSSKEKP. 2 stretches are compositionally biased toward low complexity: residues 522 to 535 and 550 to 563; these read PKLS…SPVS and SGSS…SRVP. Composition is skewed to polar residues over residues 564–574 and 652–666; these read TNLTSSCQTNG and SGQN…SKSA. Serine 667 and serine 716 each carry phosphoserine. Polar residues-rich tracts occupy residues 707–717 and 725–741; these read VSQSSAESLSP and SFTT…SRTC. Phosphoserine occurs at positions 753 and 797. Disordered regions lie at residues 799–818 and 873–901; these read PDGF…SPKL and NSKG…VSSQ. Residues 887–901 are compositionally biased toward low complexity; sequence AATSTSSSQLSVSSQ. The tract at residues 906-949 is required for homodimerization; that stretch reads SSQLQLHSLLSSISSKEGTYAKLGGLYTQSLARLVTKCEDLFMG. One can recognise a Protein kinase domain in the interval 940 to 1291; sequence VTKCEDLFMG…EAKRVLQCLL (352 aa). The span at 1134–1144 shows a compositional bias: polar residues; the sequence is SSPGPSANPSV. A disordered region spans residues 1134-1166; the sequence is SSPGPSANPSVPTTTSRCPSAAPAATTACQGGP. Residues 1145–1162 show a composition bias toward low complexity; that stretch reads PTTTSRCPSAAPAATTAC. The tract at residues 1293 to 1368 is required for homodimerization; the sequence is GPRRELVEQP…LQSLKLLQLL (76 aa).

The protein belongs to the protein kinase superfamily. As to quaternary structure, homodimer. Dimerization leads to the catalytic activation of CSK. Interacts (via C-terminus) with RND2. Interacts with CSK (via SH2 domain) in a Tyr-391 phosphorylation-dependent manner; this interaction potentiates kinase activity of CSK. Interacts with NOTCH1 intracellular domain (N1ICD). Forms a complex with N1ICD and MAML1, in a MAML1-dependent manner. Phosphorylated by CSK on Tyr-238, Tyr-343, and Tyr-391; Tyr-391 is a primary site of phosphorylation. In terms of tissue distribution, highly-expressed in brain, including cortical and hippocampal pyramidal neurons, as well as in kidney, spleen, colon and small intestine.

It localises to the cytoplasm. The protein resides in the nucleus. The protein localises to the cell junction. It is found in the focal adhesion. Catalytically inactive protein kinase that acts as a scaffold protein. Functions as an effector of the small GTPase RND2, which stimulates RhoA activity and inhibits NGF-induced neurite outgrowth. Promotes Src family kinase (SFK) signallig by regulating the subcellular localization of CSK, a negative regulator of these kinases, leading to the regulation of cell morphology and motility by a CSK-dependent mechanism. Acts as a critical coactivator of Notch signaling. The protein is Inactive tyrosine-protein kinase PRAG1 of Rattus norvegicus (Rat).